Reading from the N-terminus, the 338-residue chain is UDP-3-O-acylglucosamine N-acyltransferase (338 aa).

Catalysis depends on histidine 239, which acts as the Proton acceptor.

It belongs to the transferase hexapeptide repeat family. LpxD subfamily. In terms of assembly, homotrimer.

It carries out the reaction a UDP-3-O-[(3R)-3-hydroxyacyl]-alpha-D-glucosamine + a (3R)-hydroxyacyl-[ACP] = a UDP-2-N,3-O-bis[(3R)-3-hydroxyacyl]-alpha-D-glucosamine + holo-[ACP] + H(+). Its pathway is bacterial outer membrane biogenesis; LPS lipid A biosynthesis. In terms of biological role, catalyzes the N-acylation of UDP-3-O-acylglucosamine using 3-hydroxyacyl-ACP as the acyl donor. Is involved in the biosynthesis of lipid A, a phosphorylated glycolipid that anchors the lipopolysaccharide to the outer membrane of the cell. This chain is UDP-3-O-acylglucosamine N-acyltransferase, found in Xylella fastidiosa (strain 9a5c).